The chain runs to 229 residues: uncharacterized protein (229 aa).

An S4 RNA-binding domain is found at 2–69 (QRLAKLISNA…KSRLWIYYKP (68 aa)). The active-site Nucleophile is D102.

It belongs to the pseudouridine synthase RsuA family.

The enzyme catalyses a uridine in RNA = a pseudouridine in RNA. This is an uncharacterized protein from Rickettsia bellii (strain RML369-C).